We begin with the raw amino-acid sequence, 199 residues long: dITP/XTP pyrophosphatase (199 aa).

12 to 17 (SGNAGK) provides a ligand contact to substrate. D73 (proton acceptor) is an active-site residue. D73 is a Mg(2+) binding site. Substrate is bound by residues S74, 157 to 160 (FGYD), K180, and 185 to 186 (HR).

This sequence belongs to the HAM1 NTPase family. Homodimer. Mg(2+) serves as cofactor.

It carries out the reaction XTP + H2O = XMP + diphosphate + H(+). The catalysed reaction is dITP + H2O = dIMP + diphosphate + H(+). The enzyme catalyses ITP + H2O = IMP + diphosphate + H(+). Functionally, pyrophosphatase that catalyzes the hydrolysis of nucleoside triphosphates to their monophosphate derivatives, with a high preference for the non-canonical purine nucleotides XTP (xanthosine triphosphate), dITP (deoxyinosine triphosphate) and ITP. Seems to function as a house-cleaning enzyme that removes non-canonical purine nucleotides from the nucleotide pool, thus preventing their incorporation into DNA/RNA and avoiding chromosomal lesions. This chain is dITP/XTP pyrophosphatase, found in Neisseria meningitidis serogroup B (strain ATCC BAA-335 / MC58).